We begin with the raw amino-acid sequence, 947 residues long: Coiled-coil domain-containing protein 39 (947 aa).

Coiled coils occupy residues 16–194, 221–402, 471–522, and 582–813; these read AIPV…TLDN, QELI…KELL, KVNT…TEKI, and VLTL…IRSG. Low complexity-rich tracts occupy residues 866 to 911 and 926 to 947; these read SLPS…VSSP and SPRG…CKSP. Positions 866–947 are disordered; the sequence is SLPSPSSTPS…SRSSSKCKSP (82 aa).

The protein belongs to the CCDC39 family.

The protein localises to the cytoplasm. It localises to the cytoskeleton. The protein resides in the cilium axoneme. Its function is as follows. Required for assembly of dynein regulatory complex (DRC) and inner dynein arm (IDA) complexes, which are responsible for ciliary beat regulation, thereby playing a central role in motility in cilia and flagella. Probably acts together with ccdc40 to form a molecular ruler that determines the 96 nanometer (nm) repeat length and arrangements of components in cilia and flagella. Not required for outer dynein arm complexes assembly. This chain is Coiled-coil domain-containing protein 39 (ccdc39), found in Danio rerio (Zebrafish).